Consider the following 323-residue polypeptide: Lipoyl synthase (323 aa).

7 residues coordinate [4Fe-4S] cluster: C61, C66, C72, C87, C91, C94, and S303. A Radical SAM core domain is found at 73 to 292 (WTKKTATFLV…EQYGLSIGIP (220 aa)).

It belongs to the radical SAM superfamily. Lipoyl synthase family. [4Fe-4S] cluster serves as cofactor.

Its subcellular location is the cytoplasm. It carries out the reaction [[Fe-S] cluster scaffold protein carrying a second [4Fe-4S](2+) cluster] + N(6)-octanoyl-L-lysyl-[protein] + 2 oxidized [2Fe-2S]-[ferredoxin] + 2 S-adenosyl-L-methionine + 4 H(+) = [[Fe-S] cluster scaffold protein] + N(6)-[(R)-dihydrolipoyl]-L-lysyl-[protein] + 4 Fe(3+) + 2 hydrogen sulfide + 2 5'-deoxyadenosine + 2 L-methionine + 2 reduced [2Fe-2S]-[ferredoxin]. It participates in protein modification; protein lipoylation via endogenous pathway; protein N(6)-(lipoyl)lysine from octanoyl-[acyl-carrier-protein]: step 2/2. Functionally, catalyzes the radical-mediated insertion of two sulfur atoms into the C-6 and C-8 positions of the octanoyl moiety bound to the lipoyl domains of lipoate-dependent enzymes, thereby converting the octanoylated domains into lipoylated derivatives. The protein is Lipoyl synthase of Protochlamydia amoebophila (strain UWE25).